Reading from the N-terminus, the 644-residue chain is Keratin, type II cytoskeletal 1 (644 aa).

The interval Ser2–Arg179 is head. The residue at position 12 (Arg12) is an Omega-N-methylarginine. 2 positions are modified to phosphoserine: Ser18 and Ser21. A compositionally biased stretch (low complexity) spans Ala22–Arg38. The tract at residues Ala22–Ser47 is disordered. An Omega-N-methylarginine modification is found at Arg45. Ser66 is modified (phosphoserine). An Omega-N-methylarginine modification is found at Arg82. The interval Glu180 to Leu215 is coil 1A. In terms of domain architecture, IF rod spans Glu180–Met493. The linker 1 stretch occupies residues Gln216–Phe234. A coil 1B region spans residues Ile235–Met326. Lys276 bears the N6,N6-dimethyllysine mark. Residues Gln327–Ile350 are linker 12. The residue at position 344 (Ser344) is a Phosphoserine. The segment at Ile351–Glu489 is coil 2. Disordered stretches follow at residues Glu489 to Gly523 and Ser568 to Arg644. Residues Glu490–Arg644 form a tail region. Residues Val501–Thr511 are compositionally biased toward low complexity. Gly residues-rich tracts occupy residues Ser513–Gly523 and Ser568–Ser620. An omega-N-methylarginine mark is found at Arg518 and Arg588. Positions Gly621–Ser631 are enriched in low complexity. Residues Val632–Arg644 are compositionally biased toward polar residues.

The protein belongs to the intermediate filament family. Heterotetramer of two type I and two type II keratins. Heterodimer with KRT10. Two heterodimers of KRT1 and KRT10 form a heterotetramer. Forms a heterodimer with KRT14; the interaction is more abundant in the absence of KRT5. Interacts with PLEC isoform 1C, when in a heterodimer with KRT10. Interacts with ITGB1 in the presence of RACK1 and SRC, and with RACK1. Interacts with C1QBP; the association represents a cell surface kininogen receptor. Interacts with EPPK1; interaction is dependent of higher-order structure of intermediate filament. In terms of processing, undergoes deimination of some arginine residues (citrullination). The source of this protein is neonatal foreskin. The 67-kDa type II keratins are expressed in terminally differentiating epidermis.

Its subcellular location is the cell membrane. It is found in the cytoplasm. May regulate the activity of kinases such as PKC and SRC via binding to integrin beta-1 (ITB1) and the receptor of activated protein C kinase 1 (RACK1). In complex with C1QBP is a high affinity receptor for kininogen-1/HMWK. The protein is Keratin, type II cytoskeletal 1 (KRT1) of Homo sapiens (Human).